The chain runs to 525 residues: NGFI-A-binding protein 2 (525 aa).

Residues 1-31 are disordered; it reads MHRAPSPTAEQPPGRGDNTRRTPQPRFKASA. Ser-6 is modified (phosphoserine). The NCD1 stretch occupies residues 35–113; that stretch reads ALPRTLGELQ…REWATNPGLF (79 aa). Residues 135 to 238 form a disordered region; it reads GTRKGSMSNG…GAGGGPDRLE (104 aa). Phosphoserine occurs at positions 157, 159, 162, and 171. A compositionally biased stretch (gly residues) spans 212–234; that stretch reads AGGGVSEGPGVGGVAAGGAGGGP. The interval 267-356 is NCD2; that stretch reads LLKLNKKLAR…SRQVARESTY (90 aa). Positions 353-384 are necessary for nuclear localization; the sequence is ESTYLSSLKGSRLHSEELGGPPLKKLKQEVGE. Lys-379 is covalently cross-linked (Glycyl lysine isopeptide (Lys-Gly) (interchain with G-Cter in SUMO1)). The tract at residues 381–416 is disordered; that stretch reads EVGEQSHNEIQQPPPGPESYAPPYRPSLEEDSASLS. Phosphoserine is present on Ser-479. The disordered stretch occupies residues 501–525; sequence APGPHPALVEGRRSSVKVEAEASRQ. Residues 510–525 show a composition bias toward basic and acidic residues; it reads EGRRSSVKVEAEASRQ. Residue Lys-517 forms a Glycyl lysine isopeptide (Lys-Gly) (interchain with G-Cter in SUMO1); alternate linkage. Residue Lys-517 forms a Glycyl lysine isopeptide (Lys-Gly) (interchain with G-Cter in SUMO2); alternate linkage.

Belongs to the NAB family. In terms of assembly, homomultimers may associate with EGR1 bound to DNA. Sumoylation by EGR2 represses EGR2 transcriptional activity in hindbrain. In terms of tissue distribution, highly expressed in brain and thymus, and at lower levels in spleen, kidney, heart and testis. Isoform 1 is predominantly expressed in testis, whereas isoform 3 is more abundant in thymus.

The protein resides in the nucleus. In terms of biological role, acts as a transcriptional repressor for zinc finger transcription factors EGR1 and EGR2. Isoform 2 lacks repression ability. This is NGFI-A-binding protein 2 (Nab2) from Mus musculus (Mouse).